The sequence spans 175 residues: Pituitary adenylate cyclase-activating polypeptide (175 aa).

The first 24 residues, 1-24 (MTMCSGARLALLVYGIIMHSSVSC), serve as a signal peptide directing secretion. Positions 25–78 (SPAAGLSFPGIRPEDEAYDQDGNPLQDFYDWDPPGVGSPASALRDAYALYYPAD) are excised as a propeptide. Residues 149 to 157 (VKKYLAAVL) form an important for receptor binding region. Position 157 is a leucine amide (L157). K168 is subject to Lysine amide. The propeptide occupies 172–175 (IAYL).

The protein belongs to the glucagon family.

It localises to the secreted. In terms of biological role, PACAP is a neuropeptide involved in diverse array of physiological processes through activating the PACAP subfamily of class B1 G protein-coupled receptors: VIP receptor 1 (VIPR1), VIP receptor 2 (VIPR2), and PACAP type I receptor (ADCYAP1R1). Exerts neuroprotective and general cytoprotective effects due to anti-apoptotic, anti-inflammatory, and antioxidant actions. Promotes neuron projection development through the RAPGEF2/Rap1/B-Raf/ERK pathway. In chromaffin cells, induces long-lasting increase of intracellular calcium concentrations and neuroendocrine secretion. Involved in the control of glucose homeostasis, induces insulin secretion by pancreatic beta cells. PACAP exists in two bioactive forms from proteolysis of the same precursor protein, PACAP27 and PACAP38, which differ by eleven amino acid residues in the C-terminus. This is Pituitary adenylate cyclase-activating polypeptide from Mus musculus (Mouse).